Reading from the N-terminus, the 285-residue chain is Acetylglutamate kinase (285 aa).

Substrate-binding positions include 55 to 56, Arg77, and Asn171; that span reads GG.

Belongs to the acetylglutamate kinase family. ArgB subfamily.

It is found in the cytoplasm. The enzyme catalyses N-acetyl-L-glutamate + ATP = N-acetyl-L-glutamyl 5-phosphate + ADP. The protein operates within amino-acid biosynthesis; L-arginine biosynthesis; N(2)-acetyl-L-ornithine from L-glutamate: step 2/4. Catalyzes the ATP-dependent phosphorylation of N-acetyl-L-glutamate. This is Acetylglutamate kinase from Chlorobaculum tepidum (strain ATCC 49652 / DSM 12025 / NBRC 103806 / TLS) (Chlorobium tepidum).